Consider the following 148-residue polypeptide: Ubiquitin-conjugating enzyme E2 13 (148 aa).

Residues 2–148 (ALPKRIIKEI…AREWTKKYAV (147 aa)) enclose the UBC core domain. Catalysis depends on cysteine 86, which acts as the Glycyl thioester intermediate.

It belongs to the ubiquitin-conjugating enzyme family. As to quaternary structure, heterodimer with spm2.

It catalyses the reaction S-ubiquitinyl-[E1 ubiquitin-activating enzyme]-L-cysteine + [E2 ubiquitin-conjugating enzyme]-L-cysteine = [E1 ubiquitin-activating enzyme]-L-cysteine + S-ubiquitinyl-[E2 ubiquitin-conjugating enzyme]-L-cysteine.. The protein operates within protein modification; protein ubiquitination. Has a role in the DNA error-free postreplication repair (PRR) pathway. The ubc13/spm2 heterodimer catalyzes the synthesis of non-canonical poly-ubiquitin chains that are linked through 'Lys-63'. In Schizosaccharomyces pombe (strain 972 / ATCC 24843) (Fission yeast), this protein is Ubiquitin-conjugating enzyme E2 13 (ubc13).